The following is a 264-amino-acid chain: Proliferating cell nuclear antigen (264 aa).

The DNA-binding element occupies Arg-61–Lys-80.

This sequence belongs to the PCNA family. As to quaternary structure, homotrimer. Forms a complex with activator 1 heteropentamer in the presence of ATP.

Its subcellular location is the nucleus. This protein is an auxiliary protein of DNA polymerase delta and is involved in the control of eukaryotic DNA replication by increasing the polymerase's processibility during elongation of the leading strand. This chain is Proliferating cell nuclear antigen (PCNA), found in Styela clava (Sea squirt).